A 356-amino-acid polypeptide reads, in one-letter code: Peptide chain release factor 1 (356 aa).

Residue Q234 is modified to N5-methylglutamine.

The protein belongs to the prokaryotic/mitochondrial release factor family. Methylated by PrmC. Methylation increases the termination efficiency of RF1.

The protein resides in the cytoplasm. In terms of biological role, peptide chain release factor 1 directs the termination of translation in response to the peptide chain termination codons UAG and UAA. This is Peptide chain release factor 1 from Parafrankia sp. (strain EAN1pec).